We begin with the raw amino-acid sequence, 200 residues long: Glutathione S-transferase 1-1 (200 aa).

One can recognise a GST N-terminal domain in the interval 1 to 73 (GSSPCRSVIM…YLVEKYGKTD (73 aa)). Glutathione contacts are provided by residues S2, 43–45 (HTI), and 57–59 (ESR). A GST C-terminal domain is found at 79-200 (CPKKRAVINQ…AGCLEFKKYF (122 aa)).

Belongs to the GST superfamily. Theta family. In terms of assembly, homodimer.

It catalyses the reaction RX + glutathione = an S-substituted glutathione + a halide anion + H(+). The enzyme catalyses 1,1,1-trichloro-2,2-bis(4-chlorophenyl)ethane = 1,1-dichloro-2,2-bis(4-chlorophenyl)ethylene + chloride + H(+). In terms of biological role, conjugation of reduced glutathione to a wide number of exogenous and endogenous hydrophobic electrophiles. Has DDT dehydrochlorinase activity. This Drosophila teissieri (Fruit fly) protein is Glutathione S-transferase 1-1 (GstD1).